A 636-amino-acid polypeptide reads, in one-letter code: Putative cysteine-rich receptor-like protein kinase 33 (636 aa).

The first 25 residues, 1 to 25 (MRKTKKISFLIFWVVLISIIGAISS), serve as a signal peptide directing secretion. 2 consecutive Gnk2-homologous domains span residues 26 to 128 (QQCN…NSSF) and 138 to 245 (YMEH…LYPF). At 26 to 266 (QQCNETGYFE…PGSKRNISVG (241 aa)) the chain is on the extracellular side. 10 N-linked (GlcNAc...) asparagine glycosylation sites follow: Asn-29, Asn-63, Asn-105, Asn-125, Asn-149, Asn-173, Asn-185, Asn-188, Asn-250, and Asn-262. Residues 267 to 287 (FFVAIVVATGVVISVLSTLVV) form a helical membrane-spanning segment. Residues 288 to 636 (VLVCRKRKTD…DSLIDDLVPR (349 aa)) are Cytoplasmic-facing. A Protein kinase domain is found at 321–600 (FSKCNMLGQG…MMLTSNSITL (280 aa)). ATP is bound by residues 327–335 (LGQGGFGEV) and Lys-349. Tyr-394 carries the phosphotyrosine modification. Asp-446 acts as the Proton acceptor in catalysis. Residue Ser-450 is modified to Phosphoserine. Position 486 is a phosphothreonine (Thr-486). A Phosphotyrosine modification is found at Tyr-494.

Belongs to the protein kinase superfamily. Ser/Thr protein kinase family. CRK subfamily.

Its subcellular location is the membrane. The enzyme catalyses L-seryl-[protein] + ATP = O-phospho-L-seryl-[protein] + ADP + H(+). It carries out the reaction L-threonyl-[protein] + ATP = O-phospho-L-threonyl-[protein] + ADP + H(+). This is Putative cysteine-rich receptor-like protein kinase 33 (CRK33) from Arabidopsis thaliana (Mouse-ear cress).